Here is a 64-residue protein sequence, read N- to C-terminus: Large ribosomal subunit protein uL29 (64 aa).

This sequence belongs to the universal ribosomal protein uL29 family.

This is Large ribosomal subunit protein uL29 from Ralstonia pickettii (strain 12J).